Here is a 652-residue protein sequence, read N- to C-terminus: tRNA 5-methylaminomethyl-2-thiouridine biosynthesis bifunctional protein MnmC (652 aa).

The interval 1–235 (MPDRLVPATL…EPALRVGEYA (235 aa)) is tRNA (mnm(5)s(2)U34)-methyltransferase. The FAD-dependent cmnm(5)s(2)U34 oxidoreductase stretch occupies residues 259 to 652 (IGAGLAGCAV…IRALRGRQIG (394 aa)).

It in the N-terminal section; belongs to the methyltransferase superfamily. tRNA (mnm(5)s(2)U34)-methyltransferase family. The protein in the C-terminal section; belongs to the DAO family. Requires FAD as cofactor.

Its subcellular location is the cytoplasm. It catalyses the reaction 5-aminomethyl-2-thiouridine(34) in tRNA + S-adenosyl-L-methionine = 5-methylaminomethyl-2-thiouridine(34) in tRNA + S-adenosyl-L-homocysteine + H(+). In terms of biological role, catalyzes the last two steps in the biosynthesis of 5-methylaminomethyl-2-thiouridine (mnm(5)s(2)U) at the wobble position (U34) in tRNA. Catalyzes the FAD-dependent demodification of cmnm(5)s(2)U34 to nm(5)s(2)U34, followed by the transfer of a methyl group from S-adenosyl-L-methionine to nm(5)s(2)U34, to form mnm(5)s(2)U34. The protein is tRNA 5-methylaminomethyl-2-thiouridine biosynthesis bifunctional protein MnmC of Burkholderia ambifaria (strain MC40-6).